Here is a 246-residue protein sequence, read N- to C-terminus: Biosynthetic peptidoglycan transglycosylase (246 aa).

Residues 20-42 traverse the membrane as a helical segment; the sequence is SLRWVLAAPLLFAAASVLQVLAL.

This sequence belongs to the glycosyltransferase 51 family.

Its subcellular location is the cell inner membrane. The enzyme catalyses [GlcNAc-(1-&gt;4)-Mur2Ac(oyl-L-Ala-gamma-D-Glu-L-Lys-D-Ala-D-Ala)](n)-di-trans,octa-cis-undecaprenyl diphosphate + beta-D-GlcNAc-(1-&gt;4)-Mur2Ac(oyl-L-Ala-gamma-D-Glu-L-Lys-D-Ala-D-Ala)-di-trans,octa-cis-undecaprenyl diphosphate = [GlcNAc-(1-&gt;4)-Mur2Ac(oyl-L-Ala-gamma-D-Glu-L-Lys-D-Ala-D-Ala)](n+1)-di-trans,octa-cis-undecaprenyl diphosphate + di-trans,octa-cis-undecaprenyl diphosphate + H(+). It functions in the pathway cell wall biogenesis; peptidoglycan biosynthesis. In terms of biological role, peptidoglycan polymerase that catalyzes glycan chain elongation from lipid-linked precursors. This Xanthomonas campestris pv. campestris (strain 8004) protein is Biosynthetic peptidoglycan transglycosylase.